Consider the following 90-residue polypeptide: Small ribosomal subunit protein bS20 (90 aa).

This sequence belongs to the bacterial ribosomal protein bS20 family.

Its function is as follows. Binds directly to 16S ribosomal RNA. This Francisella philomiragia subsp. philomiragia (strain ATCC 25017 / CCUG 19701 / FSC 153 / O#319-036) protein is Small ribosomal subunit protein bS20.